Reading from the N-terminus, the 466-residue chain is Neuronal acetylcholine receptor subunit non-alpha-3 (466 aa).

Residues 1 to 28 form the signal peptide; that stretch reads MKLQISGLLLVTAVAYATIEAPEEFVSL. Over 29–235 the chain is Extracellular; that stretch reads AEMEDTLLRN…VTYSFILKRL (207 aa). Residues Asn-54, Asn-141, Asn-169, and Asn-208 are each glycosylated (N-linked (GlcNAc...) asparagine). The cysteines at positions 156 and 170 are disulfide-linked. 3 consecutive transmembrane segments (helical) span residues 236–260, 268–285, and 302–323; these read PLFY…VFYL, LLLS…LLVI, and YLLF…VINV. Topologically, residues 324–438 are cytoplasmic; the sequence is HHRSSATYHP…WKFVAQVLDR (115 aa). A helical transmembrane segment spans residues 439–456; sequence IFLWVFLTASVLGTILIF.

It belongs to the ligand-gated ion channel (TC 1.A.9) family. Acetylcholine receptor (TC 1.A.9.1) subfamily. As to quaternary structure, neuronal AChR seems to be composed of two different type of subunits: alpha and non-alpha (beta). As to expression, retina, tectum and brain.

The protein localises to the postsynaptic cell membrane. The protein resides in the cell membrane. Functionally, after binding acetylcholine, the AChR responds by an extensive change in conformation that affects all subunits and leads to opening of an ion-conducting channel across the plasma membrane. This Carassius auratus (Goldfish) protein is Neuronal acetylcholine receptor subunit non-alpha-3.